Reading from the N-terminus, the 1188-residue chain is Carboxylic acid reductase (1188 aa).

Residues H315, S408, 429-430, T434, D507, 519-522, K528, and K629 each bind AMP; these read DG and YVDR. The 79-residue stretch at 665 to 743 folds into the Carrier domain; sequence AGERPVIETV…SVAAHIEKER (79 aa). The residue at position 702 (S702) is an O-(pantetheine 4'-phosphoryl)serine. NADP(+)-binding positions include 801 to 804, R828, R838, 868 to 869, 894 to 896, S934, Y970, K974, and S997; these read NGWL, DF, and SGA.

This sequence belongs to the ATP-dependent AMP-binding enzyme family. Carboxylic acid reductase subfamily. Requires pantetheine 4'-phosphate as cofactor.

It carries out the reaction a carboxylate + ATP + NADPH + H(+) = an aldehyde + AMP + diphosphate + NADP(+). In terms of biological role, catalyzes the ATP- and NADPH-dependent reduction of carboxylic acids to the corresponding aldehydes. Catalyzes the reduction of a very wide range of carboxylic acids, including benzoic acids, heterocyclic, phenylacetic, phenylpropanoic and fatty acid substrates. The polypeptide is Carboxylic acid reductase (Segniliparus rugosus (strain ATCC BAA-974 / DSM 45345 / CCUG 50838 / CIP 108380 / JCM 13579 / CDC 945)).